Here is a 337-residue protein sequence, read N- to C-terminus: Inositol 2-dehydrogenase (337 aa).

The protein belongs to the Gfo/Idh/MocA family. Homotetramer.

It carries out the reaction myo-inositol + NAD(+) = scyllo-inosose + NADH + H(+). Its function is as follows. Involved in the oxidation of myo-inositol (MI) to 2-keto-myo-inositol (2KMI or 2-inosose). This is Inositol 2-dehydrogenase from Burkholderia cenocepacia (strain HI2424).